The chain runs to 224 residues: Voltage-dependent calcium channel gamma-1 subunit (224 aa).

Residues 1–10 are Cytoplasmic-facing; the sequence is MSQTKALKVR. A helical membrane pass occupies residues 11–29; the sequence is VTLFCILVGIVLALVAVVT. The Extracellular segment spans residues 30–110; that stretch reads DHWAVLSPHV…TQKEYSISAA (81 aa). Asn43 and Asn81 each carry an N-linked (GlcNAc...) asparagine glycan. A disulfide bridge connects residues Cys57 and Cys82. Residues 111 to 131 traverse the membrane as a helical segment; the sequence is AIAIFSLGFIILGTICGLLSF. The Cytoplasmic segment spans residues 132–136; the sequence is RKKRD. Residues 137–157 traverse the membrane as a helical segment; sequence YLLRPASMFYAFAGLCIFVSV. Over 158–181 the chain is Extracellular; the sequence is EVMRQSVKRMIDSEDTVWIDYYYG. The chain crosses the membrane as a helical span at residues 182–206; the sequence is WSFACACAAFILLFLGGIALLLFSL. The Cytoplasmic portion of the chain corresponds to 207-224; the sequence is PRMPQYPWESCMDAEPEH.

It belongs to the PMP-22/EMP/MP20 family. CACNG subfamily. Component of a calcium channel complex consisting of a pore-forming alpha subunit (CACNA1S) and the ancillary subunits CACNB1 or CACNB2, CACNG1 and CACNA2D1. The channel complex contains alpha, beta, gamma and delta subunits in a 1:1:1:1 ratio, i.e. it contains either CACNB1 or CACNB2. Post-translationally, N-glycosylated.

Its subcellular location is the cell membrane. It localises to the sarcolemma. Regulatory subunit of the voltage-gated calcium channel that gives rise to L-type calcium currents in skeletal muscle. Regulates channel inactivation kinetics. The protein is Voltage-dependent calcium channel gamma-1 subunit (CACNG1) of Sus scrofa (Pig).